We begin with the raw amino-acid sequence, 298 residues long: GTPase Era (298 aa).

The region spanning 7–174 (RSGFVSIIGR…VELVRKALPQ (168 aa)) is the Era-type G domain. The interval 15-22 (GRPNVGKS) is G1. 15-22 (GRPNVGKS) lines the GTP pocket. The tract at residues 41-45 (QTTRN) is G2. The interval 62–65 (DTPG) is G3. GTP is bound by residues 62–66 (DTPGI) and 124–127 (NKVD). The tract at residues 124 to 127 (NKVD) is G4. Residues 153-155 (ISA) are G5. A KH type-2 domain is found at 205–283 (TRDEVPYATA…FLELFVRVRK (79 aa)).

This sequence belongs to the TRAFAC class TrmE-Era-EngA-EngB-Septin-like GTPase superfamily. Era GTPase family. Monomer.

Its subcellular location is the cytoplasm. The protein resides in the cell inner membrane. Its function is as follows. An essential GTPase that binds both GDP and GTP, with rapid nucleotide exchange. Plays a role in 16S rRNA processing and 30S ribosomal subunit biogenesis and possibly also in cell cycle regulation and energy metabolism. The protein is GTPase Era of Geobacter metallireducens (strain ATCC 53774 / DSM 7210 / GS-15).